A 439-amino-acid chain; its full sequence is CBL-interacting serine/threonine-protein kinase 20 (439 aa).

In terms of domain architecture, Protein kinase spans 12–266; the sequence is YELGRLLGQG…IEKIMENSWF (255 aa). Residues 18 to 26 and Lys-41 contribute to the ATP site; that span reads LGQGTFAKV. The Proton acceptor role is filled by Asp-134. The interval 152-181 is activation loop; sequence DFGLSALRESKQQDGLLHTTCGTPAYVAPE. The residue at position 156 (Ser-156) is a Phosphoserine. Thr-170 is modified (phosphothreonine). The NAF domain maps to 297–322; the sequence is VKPMSYNAFDLISSLSQGFDLSGLFE. The tract at residues 326–356 is PPI; sequence RSESKFTTKKDAKEIVSKFEEIATSSERFNL.

It belongs to the protein kinase superfamily. CAMK Ser/Thr protein kinase family. SNF1 subfamily. Requires Mn(2+) as cofactor. Autophosphorylated. Confined to mature leaves.

The enzyme catalyses L-seryl-[protein] + ATP = O-phospho-L-seryl-[protein] + ADP + H(+). It catalyses the reaction L-threonyl-[protein] + ATP = O-phospho-L-threonyl-[protein] + ADP + H(+). In terms of biological role, CIPK serine-threonine protein kinases interact with CBL proteins. Binding of a CBL protein to the regulatory NAF domain of CIPK protein lead to the activation of the kinase in a calcium-dependent manner. Required for the abscisic acid-mediated (ABA) signaling pathway involved in seed germination and growth elongation inhibition. The chain is CBL-interacting serine/threonine-protein kinase 20 (CIPK20) from Arabidopsis thaliana (Mouse-ear cress).